An 806-amino-acid chain; its full sequence is MSGWPRIYYKLLNLPLSILVKSKSIPAEPAQELGLDTSRPIMYVLPYNSKADLLTLRAQCLAHDLPDPLEPLEIDGALLPRYVFIHGGPRVFTYYTPKEESVKLFHDYLDLHRSNPALDVQMVPVSVMFGRAPGREKGEENPPLRMLNGVQKFFAISWLGRDSFVRFSPSVSLRRMADEHGTDKIIAQKLARVARMHFARQRLAAVGPRLPARQDLFNKLLASKAIARAVEDEARSKKISHEKAQQNAIALMEEIAANFSYEMIRLTDRILGFTWNRLYQGINVHNAERVRQLAHDGHEIVYVPCHRSHMDYLLLSYVLYHQGLVPPHIAAGINLNFWPAGPIFRRLGAFFIRRTFKGNKLYSTVFREYLGELFSRGYSVEYFVEGGRSRTGRLLDPKTGTLSMTIQAMLRGGTRPITLVPIYIGYEHVMEVGTYAKELRGATKEKESLPQMLKGLSKLRNLGQGYVNFGEPMPLMTYLNQHVPEWRESIDPIEAIRPAWLTPTVNSIAADLMVRINNAGAANAMNLCCTALLASRQRSLTREQLTEQLDCYLDLMRNVPYSTDSTVPAASAGELIAHALQMNKFEVEKDTIGDIIILPREQAVLMTYYRNNIAHMLIMPSLMAAIITQHRRISRDALQQHVEALYPMLKAELFLRWEREELASVIDALASEMQRQGLITLQDDELHINPTHSRTLQLLAAGARETLQRYAITFWLLSANPSINRSTLEKESRTVAQRLSVLHGINAPEFFDKAVFSSLVLTLRDEGYISDTGDAEPAETMKIYQMLADLITSDVRLTIESATQGE.

The HXXXXD motif motif lies at 305 to 310; it reads CHRSHM.

Belongs to the GPAT/DAPAT family.

It is found in the cell inner membrane. It catalyses the reaction sn-glycerol 3-phosphate + an acyl-CoA = a 1-acyl-sn-glycero-3-phosphate + CoA. It participates in phospholipid metabolism; CDP-diacylglycerol biosynthesis; CDP-diacylglycerol from sn-glycerol 3-phosphate: step 1/3. The protein is Glycerol-3-phosphate acyltransferase of Salmonella paratyphi A (strain ATCC 9150 / SARB42).